A 201-amino-acid polypeptide reads, in one-letter code: IMP cyclohydrolase (201 aa).

It belongs to the archaeal IMP cyclohydrolase family.

The enzyme catalyses IMP + H2O = 5-formamido-1-(5-phospho-D-ribosyl)imidazole-4-carboxamide. The protein operates within purine metabolism; IMP biosynthesis via de novo pathway; IMP from 5-formamido-1-(5-phospho-D-ribosyl)imidazole-4-carboxamide: step 1/1. Catalyzes the cyclization of 5-formylamidoimidazole-4-carboxamide ribonucleotide to IMP. The polypeptide is IMP cyclohydrolase (Methanococcus maripaludis (strain C6 / ATCC BAA-1332)).